Here is a 110-residue protein sequence, read N- to C-terminus: MQPGGQPDMSALLAQAQQVQQQLMEAQEALANAEVNGQAGGGLVQVTMRGSGEVVAVRIDPKVVDPSDVETLQDLIVGAVADAAKQVTILAHDRLGPLAGGMGGLGLPGM.

The protein belongs to the YbaB/EbfC family. Homodimer.

The protein resides in the cytoplasm. The protein localises to the nucleoid. Binds to DNA and alters its conformation. May be involved in regulation of gene expression, nucleoid organization and DNA protection. This is Nucleoid-associated protein Mvan_5528 from Mycolicibacterium vanbaalenii (strain DSM 7251 / JCM 13017 / BCRC 16820 / KCTC 9966 / NRRL B-24157 / PYR-1) (Mycobacterium vanbaalenii).